Consider the following 296-residue polypeptide: Acetylglutamate kinase (296 aa).

Substrate-binding positions include 69–70 (GG), R91, and N193.

Belongs to the acetylglutamate kinase family. ArgB subfamily.

It localises to the cytoplasm. The catalysed reaction is N-acetyl-L-glutamate + ATP = N-acetyl-L-glutamyl 5-phosphate + ADP. It functions in the pathway amino-acid biosynthesis; L-arginine biosynthesis; N(2)-acetyl-L-ornithine from L-glutamate: step 2/4. Functionally, catalyzes the ATP-dependent phosphorylation of N-acetyl-L-glutamate. The chain is Acetylglutamate kinase from Albidiferax ferrireducens (strain ATCC BAA-621 / DSM 15236 / T118) (Rhodoferax ferrireducens).